The sequence spans 367 residues: Glutamate 5-kinase (367 aa).

ATP is bound at residue lysine 8. Serine 49, aspartate 136, and asparagine 148 together coordinate substrate. Residues 168-169 (TD) and 210-216 (TGGMATK) each bind ATP. The 79-residue stretch at 275 to 353 (TGKLYLDRGA…EEIPTILGYS (79 aa)) folds into the PUA domain.

This sequence belongs to the glutamate 5-kinase family.

The protein localises to the cytoplasm. The catalysed reaction is L-glutamate + ATP = L-glutamyl 5-phosphate + ADP. It functions in the pathway amino-acid biosynthesis; L-proline biosynthesis; L-glutamate 5-semialdehyde from L-glutamate: step 1/2. Catalyzes the transfer of a phosphate group to glutamate to form L-glutamate 5-phosphate. This chain is Glutamate 5-kinase, found in Cyanothece sp. (strain PCC 7425 / ATCC 29141).